The chain runs to 231 residues: Flagellar L-ring protein (231 aa).

Positions 1 to 18 are cleaved as a signal peptide; the sequence is MNRLMIVSLLGIATALGG. The N-palmitoyl cysteine moiety is linked to residue cysteine 19. Residue cysteine 19 is the site of S-diacylglycerol cysteine attachment. The interval 118 to 141 is disordered; that stretch reads LSLSAEYGGSRDAKGDSQAGQSNS.

Belongs to the FlgH family. The basal body constitutes a major portion of the flagellar organelle and consists of four rings (L,P,S, and M) mounted on a central rod.

The protein localises to the cell outer membrane. It is found in the bacterial flagellum basal body. In terms of biological role, assembles around the rod to form the L-ring and probably protects the motor/basal body from shearing forces during rotation. The protein is Flagellar L-ring protein of Pseudomonas aeruginosa (strain LESB58).